We begin with the raw amino-acid sequence, 345 residues long: Phenylalanine--tRNA ligase alpha subunit (345 aa).

Glutamate 253 serves as a coordination point for Mg(2+).

Belongs to the class-II aminoacyl-tRNA synthetase family. Phe-tRNA synthetase alpha subunit type 1 subfamily. Tetramer of two alpha and two beta subunits. Requires Mg(2+) as cofactor.

Its subcellular location is the cytoplasm. The enzyme catalyses tRNA(Phe) + L-phenylalanine + ATP = L-phenylalanyl-tRNA(Phe) + AMP + diphosphate + H(+). This is Phenylalanine--tRNA ligase alpha subunit from Lawsonia intracellularis (strain PHE/MN1-00).